The following is a 292-amino-acid chain: Xyloglucan endotransglucosylase/hydrolase protein 2 (292 aa).

Positions 1–24 are cleaved as a signal peptide; sequence MNRIRYCFELVSVLFLMFTANARA. The GH16 domain occupies 25 to 219; that stretch reads RGRGAIDFDV…WAYAPFKAQY (195 aa). The Nucleophile role is filled by Glu106. Glu110 serves as the catalytic Proton donor. Residues Glu110, 123–125, 133–135, 198–199, and Gly203 contribute to the xyloglucan site; these read QTN, GRE, and NW. Intrachain disulfides connect Cys227–Cys239 and Cys275–Cys288. Arg280 is a xyloglucan binding site.

This sequence belongs to the glycosyl hydrolase 16 family. XTH group 1 subfamily. Contains at least one intrachain disulfide bond essential for its enzymatic activity.

The protein localises to the secreted. Its subcellular location is the cell wall. It localises to the extracellular space. It is found in the apoplast. The enzyme catalyses breaks a beta-(1-&gt;4) bond in the backbone of a xyloglucan and transfers the xyloglucanyl segment on to O-4 of the non-reducing terminal glucose residue of an acceptor, which can be a xyloglucan or an oligosaccharide of xyloglucan.. Functionally, may catalyze xyloglucan endohydrolysis (XEH) and/or endotransglycosylation (XET). Cleaves and religates xyloglucan polymers, an essential constituent of the primary cell wall, and thereby participates in cell wall construction of growing tissues. In Arabidopsis thaliana (Mouse-ear cress), this protein is Xyloglucan endotransglucosylase/hydrolase protein 2 (XTH2).